A 909-amino-acid polypeptide reads, in one-letter code: Protein translocase subunit SecA (909 aa).

ATP-binding positions include Q87, 105–109 (GEGKT), and D507. A disordered region spans residues 857 to 909 (DTHSELAEEQPPVAENRENKQQPFVRKNEKVGRNDPCPCGSGKKYKQCHGKLN). The segment covering 871-889 (ENRENKQQPFVRKNEKVGR) has biased composition (basic and acidic residues). Positions 893, 895, 904, and 905 each coordinate Zn(2+). Basic residues predominate over residues 899-909 (KKYKQCHGKLN).

The protein belongs to the SecA family. As to quaternary structure, monomer and homodimer. Part of the essential Sec protein translocation apparatus which comprises SecA, SecYEG and auxiliary proteins SecDF-YajC and YidC. Zn(2+) is required as a cofactor.

It is found in the cell inner membrane. The protein resides in the cytoplasm. It catalyses the reaction ATP + H2O + cellular proteinSide 1 = ADP + phosphate + cellular proteinSide 2.. In terms of biological role, part of the Sec protein translocase complex. Interacts with the SecYEG preprotein conducting channel. Has a central role in coupling the hydrolysis of ATP to the transfer of proteins into and across the cell membrane, serving both as a receptor for the preprotein-SecB complex and as an ATP-driven molecular motor driving the stepwise translocation of polypeptide chains across the membrane. This chain is Protein translocase subunit SecA, found in Nitrosomonas europaea (strain ATCC 19718 / CIP 103999 / KCTC 2705 / NBRC 14298).